The primary structure comprises 161 residues: Thy-1 membrane glycoprotein (161 aa).

The signal sequence occupies residues 1–19 (MNLAISIALLLTVLQVSRG). Gln-20 carries the post-translational modification Pyrrolidone carboxylic acid. The Ig-like V-type domain maps to 20–126 (QKVTSLTACL…SQNVTVLRDK (107 aa)). Intrachain disulfides connect Cys-28/Cys-130 and Cys-38/Cys-104. Asn-42 and Asn-79 each carry an N-linked (GlcNAc...) asparagine glycan. Ser-82 is subject to Phosphoserine. Asn-119 is a glycosylation site (N-linked (GlcNAc...) asparagine). Cys-130 is lipidated: GPI-anchor amidated cysteine; alternate. Positions 131–161 (EGISLLAQNTSWLLLLLLSLSLLQATDFMSL) are cleaved as a propeptide — removed in mature form. Asn-139 is a glycosylation site (N-linked (GlcNAc...) asparagine).

The protein resides in the cell membrane. Its function is as follows. May play a role in cell-cell or cell-ligand interactions during synaptogenesis and other events in the brain. This is Thy-1 membrane glycoprotein (THY1) from Homo sapiens (Human).